A 229-amino-acid chain; its full sequence is MSSETGPVVVDPTLRRRIEPHEFDAFFDQGELRKETCLLYEIRWGGRHNIWRHTGQNTSRHVEINFIEKFTSERYFYPSTRCSIVWFLSWSPCGECSKAITEFLSGHPNVTLFIYAARLYHHTDQRNRQGLRDLISRGVTIRIMTEQEYCYCWRNFVNYPPSNEVYWPRYPNLWMRLYALELYCIHLGLPPCLKIKRRHQYPLTFFRLNLQSCHYQRIPPHILWATGFI.

Positions 10–134 constitute a CMP/dCMP-type deaminase domain; that stretch reads VDPTLRRRIE…QRNRQGLRDL (125 aa). Position 61 (histidine 61) interacts with Zn(2+). The Proton donor role is filled by glutamate 63. Residues cysteine 93 and cysteine 96 each contribute to the Zn(2+) site.

This sequence belongs to the cytidine and deoxycytidylate deaminase family. In terms of assembly, homodimer. Interacts with A1CF; form an mRNA editing complex. Interacts with RBM47; form an mRNA editing complex. Found in a complex with CELF2/CUGBP2 and A1CF. Interacts with HNRPAB. Interacts with SYNCRIP. Requires Zn(2+) as cofactor.

It is found in the cytoplasm. It localises to the nucleus. It carries out the reaction a cytidine in mRNA + H2O + H(+) = a uridine in mRNA + NH4(+). The catalysed reaction is cytidine(6666) in apoB mRNA + H2O + H(+) = uridine(6666) in apoB mRNA + NH4(+). In terms of biological role, cytidine deaminase catalyzing the cytidine to uridine postranscriptional editing of a variety of mRNAs. Form complexes with cofactors that confer differential editing activity and selectivity. Responsible for the postranscriptional editing of a CAA codon for Gln to a UAA codon for stop in the apolipoprotein B mRNA. Also involved in CGA (Arg) to UGA (Stop) editing in the NF1 mRNA. May also play a role in the epigenetic regulation of gene expression by participating in DNA demethylation. The protein is C-&gt;U-editing enzyme APOBEC-1 of Mesocricetus auratus (Golden hamster).